The primary structure comprises 276 residues: Diaminopimelate epimerase (276 aa).

Asparagine 13, glutamine 46, and asparagine 66 together coordinate substrate. Cysteine 75 functions as the Proton donor in the catalytic mechanism. Residues 76 to 77, asparagine 159, asparagine 192, and 210 to 211 contribute to the substrate site; these read GN and ER. Cysteine 219 serves as the catalytic Proton acceptor. 220–221 lines the substrate pocket; the sequence is GT.

Belongs to the diaminopimelate epimerase family. In terms of assembly, homodimer.

It localises to the cytoplasm. It carries out the reaction (2S,6S)-2,6-diaminopimelate = meso-2,6-diaminopimelate. It functions in the pathway amino-acid biosynthesis; L-lysine biosynthesis via DAP pathway; DL-2,6-diaminopimelate from LL-2,6-diaminopimelate: step 1/1. Its function is as follows. Catalyzes the stereoinversion of LL-2,6-diaminopimelate (L,L-DAP) to meso-diaminopimelate (meso-DAP), a precursor of L-lysine and an essential component of the bacterial peptidoglycan. The protein is Diaminopimelate epimerase of Stutzerimonas stutzeri (strain A1501) (Pseudomonas stutzeri).